The chain runs to 336 residues: DNA-directed RNA polymerase subunit alpha (336 aa).

Residues 1–233 (MSSNSFLTPR…EQFSFFADLE (233 aa)) are alpha N-terminal domain (alpha-NTD). Positions 247 to 336 (IDPILLRPVD…YIKEPGHASS (90 aa)) are alpha C-terminal domain (alpha-CTD).

Belongs to the RNA polymerase alpha chain family. Homodimer. The RNAP catalytic core consists of 2 alpha, 1 beta, 1 beta' and 1 omega subunit. When a sigma factor is associated with the core the holoenzyme is formed, which can initiate transcription.

The catalysed reaction is RNA(n) + a ribonucleoside 5'-triphosphate = RNA(n+1) + diphosphate. Its function is as follows. DNA-dependent RNA polymerase catalyzes the transcription of DNA into RNA using the four ribonucleoside triphosphates as substrates. The chain is DNA-directed RNA polymerase subunit alpha from Nitrosomonas europaea (strain ATCC 19718 / CIP 103999 / KCTC 2705 / NBRC 14298).